The following is a 370-amino-acid chain: Putative F-box/kelch-repeat protein At3g46050 (370 aa).

The 47-residue stretch at 15-61 (PTSFSSLPDDIVLNCLARVSRFHYPTLSLVCKGFRSLLDSRELHATR) folds into the F-box domain. Kelch repeat units follow at residues 119–165 (KIYI…VIND) and 167–212 (IYVI…VPGS).

The polypeptide is Putative F-box/kelch-repeat protein At3g46050 (Arabidopsis thaliana (Mouse-ear cress)).